The sequence spans 258 residues: MLILISPAKTLDYQSPLTTTRYTLPELLDNSQQLIHEARKLTPPQISTLMRISDKLAGINAARFHDWQPDFTPANARQAILAFKGDVYTGLQAETFSEDDFDFAQQHLRMLSGLYGVLRPLDLMQPYRLEMGIRLENARGKDLYQFWGDIITNKLNEALAAQGDNVVINLAADEYFKSVKPKKLNAEIIKPVFLDEKNGKFKIISFYAKKARGLMSRFIIENRLTKPEQLTGFNSEGYFFDEDSSSNGELVFKRYEQR.

This sequence belongs to the UPF0246 family.

The polypeptide is UPF0246 protein YaaA (Shigella flexneri serotype 5b (strain 8401)).